A 104-amino-acid chain; its full sequence is UPF0473 protein LJ_0477 (104 aa).

The protein belongs to the UPF0473 family.

The sequence is that of UPF0473 protein LJ_0477 from Lactobacillus johnsonii (strain CNCM I-12250 / La1 / NCC 533).